A 273-amino-acid chain; its full sequence is DNA repair protein RecO (273 aa).

Residues 250-273 (NVGQNPSGKDDLNERRDVDGTGES) form a disordered region. The span at 257–273 (GKDDLNERRDVDGTGES) shows a compositional bias: basic and acidic residues.

Belongs to the RecO family.

Its function is as follows. Involved in DNA repair and RecF pathway recombination. The protein is DNA repair protein RecO of Desulfitobacterium hafniense (strain Y51).